The primary structure comprises 86 residues: Small ribosomal subunit protein bS20 (86 aa).

Residues 1-25 (MANIKSQIKRIRTNEKARQRNKAYK) are disordered. Positions 12 to 25 (RTNEKARQRNKAYK) are enriched in basic and acidic residues.

It belongs to the bacterial ribosomal protein bS20 family.

In terms of biological role, binds directly to 16S ribosomal RNA. The protein is Small ribosomal subunit protein bS20 of Beutenbergia cavernae (strain ATCC BAA-8 / DSM 12333 / CCUG 43141 / JCM 11478 / NBRC 16432 / NCIMB 13614 / HKI 0122).